Reading from the N-terminus, the 338-residue chain is Holliday junction branch migration complex subunit RuvB (338 aa).

The segment at 4–184 (SDRLVSGKAR…FGISHHLQYY (181 aa)) is large ATPase domain (RuvB-L). ATP is bound by residues Arg-24, Gly-65, Lys-68, Thr-69, Thr-70, 131–133 (EDY), Arg-174, Tyr-184, and Arg-221. Mg(2+) is bound at residue Thr-69. The tract at residues 185 to 255 (HHDELTQIVM…LADEALELLA (71 aa)) is small ATPAse domain (RuvB-S). The tract at residues 258–338 (HLGFDALDRR…NIEVPDGRNS (81 aa)) is head domain (RuvB-H). Residues Arg-294, Arg-313, and Arg-318 each coordinate DNA.

It belongs to the RuvB family. In terms of assembly, homohexamer. Forms an RuvA(8)-RuvB(12)-Holliday junction (HJ) complex. HJ DNA is sandwiched between 2 RuvA tetramers; dsDNA enters through RuvA and exits via RuvB. An RuvB hexamer assembles on each DNA strand where it exits the tetramer. Each RuvB hexamer is contacted by two RuvA subunits (via domain III) on 2 adjacent RuvB subunits; this complex drives branch migration. In the full resolvosome a probable DNA-RuvA(4)-RuvB(12)-RuvC(2) complex forms which resolves the HJ.

The protein localises to the cytoplasm. It carries out the reaction ATP + H2O = ADP + phosphate + H(+). Functionally, the RuvA-RuvB-RuvC complex processes Holliday junction (HJ) DNA during genetic recombination and DNA repair, while the RuvA-RuvB complex plays an important role in the rescue of blocked DNA replication forks via replication fork reversal (RFR). RuvA specifically binds to HJ cruciform DNA, conferring on it an open structure. The RuvB hexamer acts as an ATP-dependent pump, pulling dsDNA into and through the RuvAB complex. RuvB forms 2 homohexamers on either side of HJ DNA bound by 1 or 2 RuvA tetramers; 4 subunits per hexamer contact DNA at a time. Coordinated motions by a converter formed by DNA-disengaged RuvB subunits stimulates ATP hydrolysis and nucleotide exchange. Immobilization of the converter enables RuvB to convert the ATP-contained energy into a lever motion, pulling 2 nucleotides of DNA out of the RuvA tetramer per ATP hydrolyzed, thus driving DNA branch migration. The RuvB motors rotate together with the DNA substrate, which together with the progressing nucleotide cycle form the mechanistic basis for DNA recombination by continuous HJ branch migration. Branch migration allows RuvC to scan DNA until it finds its consensus sequence, where it cleaves and resolves cruciform DNA. The sequence is that of Holliday junction branch migration complex subunit RuvB from Dichelobacter nodosus (strain VCS1703A).